Reading from the N-terminus, the 396-residue chain is Digeranylgeranylglycerophospholipid reductase (396 aa).

FAD-binding residues include glycine 14, glutamate 33, cysteine 44, glycine 45, glycine 47, arginine 100, alanine 124, glutamate 162, aspartate 283, glycine 295, and isoleucine 296. Lysine 338 and valine 374 together coordinate a 2,3-bis-O-(geranylgeranyl)-sn-glycerol 1-phospholipid.

Belongs to the geranylgeranyl reductase family. DGGGPL reductase subfamily. The cofactor is FAD.

The catalysed reaction is 2,3-bis-O-(phytanyl)-sn-glycerol 1-phosphate + 8 NADP(+) = 2,3-bis-O-(geranylgeranyl)-sn-glycerol 1-phosphate + 8 NADPH + 8 H(+). It catalyses the reaction 2,3-bis-O-(phytanyl)-sn-glycerol 1-phosphate + 8 NAD(+) = 2,3-bis-O-(geranylgeranyl)-sn-glycerol 1-phosphate + 8 NADH + 8 H(+). It carries out the reaction a 2,3-bis-O-phytanyl-sn-glycerol 1-phospholipid + 8 A = a 2,3-bis-O-(geranylgeranyl)-sn-glycerol 1-phospholipid + 8 AH2. The enzyme catalyses CDP-2,3-bis-O-(geranylgeranyl)-sn-glycerol + 8 AH2 = CDP-2,3-bis-O-(phytanyl)-sn-glycerol + 8 A. The catalysed reaction is archaetidylserine + 8 AH2 = 2,3-bis-O-phytanyl-sn-glycero-3-phospho-L-serine + 8 A. It participates in membrane lipid metabolism; glycerophospholipid metabolism. Is involved in the reduction of 2,3-digeranylgeranylglycerophospholipids (unsaturated archaeols) into 2,3-diphytanylglycerophospholipids (saturated archaeols) in the biosynthesis of archaeal membrane lipids. Catalyzes the formation of archaetidic acid (2,3-di-O-phytanyl-sn-glyceryl phosphate) from 2,3-di-O-geranylgeranylglyceryl phosphate (DGGGP) via the hydrogenation of each double bond of the isoprenoid chains. Is also probably able to reduce double bonds of geranyl groups in CDP-2,3-bis-O-(geranylgeranyl)-sn-glycerol and archaetidylserine, thus acting at various stages in the biosynthesis of archaeal membrane lipids. This is Digeranylgeranylglycerophospholipid reductase from Thermoplasma volcanium (strain ATCC 51530 / DSM 4299 / JCM 9571 / NBRC 15438 / GSS1).